A 254-amino-acid chain; its full sequence is MATTNVEENKQTQEQQPKEIKHQEVGHKSLLQSDALFQYILETSVYPREPEPMKELRDITAKHPWNLMTTSADEGQFLNMLLKLINAKNTIEIGVYTGYSLLASALALPDDGKILAMDINRENYELGLPVIQKAGVAHKIDFREGPALPVLDLLIEDAKNHGSFDFAFVDADKDNYGNYHKRLIDLVKIGGVIGYDNTLWNGSVAAPADAPMRKYVRYYRDFVMEFNKAIAADPRVEICQLPVGDGITLCRRIS.

The tract at residues 1 to 25 (MATTNVEENKQTQEQQPKEIKHQEV) is disordered. The segment covering 7–25 (EENKQTQEQQPKEIKHQEV) has biased composition (basic and acidic residues). K28 contacts substrate. Residues T70, E92, 94–95 (GV), S100, D118, and A147 contribute to the S-adenosyl-L-methionine site. Position 170 (D170) interacts with substrate. D170 is an a divalent metal cation binding site. Residue D172 participates in S-adenosyl-L-methionine binding. The a divalent metal cation site is built by D196 and N197. N201 is a binding site for substrate.

It belongs to the class I-like SAM-binding methyltransferase superfamily. Cation-dependent O-methyltransferase family. CCoAMT subfamily. It depends on a divalent metal cation as a cofactor.

The enzyme catalyses (E)-caffeoyl-CoA + S-adenosyl-L-methionine = (E)-feruloyl-CoA + S-adenosyl-L-homocysteine + H(+). The protein operates within aromatic compound metabolism; phenylpropanoid biosynthesis. Its function is as follows. Methylates caffeoyl-CoA to feruloyl-CoA and 5-hydroxyferuloyl-CoA to sinapoyl-CoA. Plays a role in the synthesis of feruloylated polysaccharides. Involved in the reinforcement of the plant cell wall. Also involved in the responding to wounding or pathogen challenge by the increased formation of cell wall-bound ferulic acid polymers. The chain is Caffeoyl-CoA O-methyltransferase from Mesembryanthemum crystallinum (Common ice plant).